We begin with the raw amino-acid sequence, 160 residues long: FMRFamide-like neuropeptides 13 (160 aa).

The signal sequence occupies residues 1-17 (MMTSLLTISMFVVAIQA). Residues 18-43 (FDSSEIRMLDEQYDTKNPFFQFLENS) constitute a propeptide that is removed on maturation. Phenylalanine amide occurs at positions 60, 73, 85, 98, 110, 123, 135, 146, and 157.

Belongs to the FARP (FMRFamide related peptide) family. In terms of tissue distribution, expressed in the ASE sensory neurons, the DD motor neurons, the 15, M3 and M5 cholinergic pharyngeal motoneurons, and the ASG, ASK and BAG neurons.

The protein resides in the secreted. In terms of biological role, probable FMRFamide-like neuropeptides. Binds to neuronal receptors such as dmsr-1 to promote sleep in response to cellular stress also known as stress-induced sleep (SIS). Plays a role in behaviors associated with SIS, acting in concert with the FMRFamide related peptide, flp-24 and neuropeptide-like protein nlp-8. Functionally, AADGAPLIRF-amide: Inhibits muscle tension in somatic muscle. Acts as a ligand for the npr-22 receptor in vitro. Acts as a ligand for isoform a of the dmsr-1 G-protein coupled receptor in vitro. Its function is as follows. APEASPFIRF-amide: Inhibits muscle tension in somatic muscle. Potent inhibitor of the activity of the dissected pharyngeal myogenic muscle system. Acts as a ligand for isoform a of the dmsr-1 G-protein coupled receptor in vitro. Acts as a ligand for the npr-22 receptor in vitro. Acts as a ligand for isoform a of the dmsr-1 G-protein coupled receptor in vitro. In terms of biological role, acts as a ligand for isoform a of the dmsr-1 G-protein coupled receptor in vitro. The polypeptide is FMRFamide-like neuropeptides 13 (Caenorhabditis elegans).